We begin with the raw amino-acid sequence, 876 residues long: MSTERYNPRDAEPRWQEKWSEAKIFETDNNDPREKYYVLEMFPYPSGRIHIGHVRNYAMGDVVARYKRARGYNVLHPMGWDAFGMPAENAAMQNKVHPKDWTYQNIASMRAQLKSMGLSLDWSREFATCDVEYYQRQQYLFLDMMEKGLVYRKQSKVNWDPVDQTVLANEQVIDGRGWRSGALVEQRELTQWFFKITDFAQDLLDALDTLDHWPEKVRLMQKNWIGRSEGLAIRWEIAAGTGPQGFTDVQVYTTRPDTLFGASFLAIAADHPLAKALSETSSDIAAFCDECRRAGTSLAALETAEKKGLDTGIKVKHPLDPAWELPVYIANFVLMDYGTGAIFACPSGDQRDLDFARKYGLPVVPVVMPRDGDAASFTVGDTAYDGDGVMINSRFLDGLTTQEAFDVVAGKLTAAQLGNEPVAERRVNFRLRDWGVSRQRYWGCPIPVIHCDDCGVVPVPKQDLPVKLPDDVTFDVPGNPLDRHPTWRNVSCPCCGKAARRETDTMDTFVDSSWYYTRFTAPWEDKPTDPAVANHWLPVDQYIGGIEHAILHLLYSRFFTRAMRETGHVAVSEPFKGLFTQGMVVHETYRLGSGANGQWVAPADIRVEDVDGARRAFLLSSGEEVTIGSVEKMSKSKKNVIDPDDILGSYGADTARFFVLSDSPPDRDVIWSEAGIEGSHRFVQRLWRLVSEAADVLRTSASTPAKDGAGRAVSQAAHKTLQAVGADLDKLAFNKAVARIYELLNTLAAPLTQVASGNADTSFVAAVRNATEILIQIIAPMMPHLAEECWAVLGHSGMVSQADWPVFHAELVAENEVVMPVQINGKKKAELTIGRDADQNAVSQAVLDLDAVKAALQGQTPKKIIVVPQRIVNIVV.

The short motif at 43 to 53 (PYPSGRIHIGH) is the 'HIGH' region element. The 'KMSKS' region signature appears at 632-636 (KMSKS). ATP is bound at residue Lys635.

The protein belongs to the class-I aminoacyl-tRNA synthetase family.

It is found in the cytoplasm. The enzyme catalyses tRNA(Leu) + L-leucine + ATP = L-leucyl-tRNA(Leu) + AMP + diphosphate. In Allorhizobium ampelinum (strain ATCC BAA-846 / DSM 112012 / S4) (Agrobacterium vitis (strain S4)), this protein is Leucine--tRNA ligase.